The chain runs to 185 residues: Peptide deformylase (185 aa).

Fe cation contacts are provided by Cys-94 and His-136. Glu-137 is an active-site residue. His-140 contributes to the Fe cation binding site.

It belongs to the polypeptide deformylase family. The cofactor is Fe(2+).

It carries out the reaction N-terminal N-formyl-L-methionyl-[peptide] + H2O = N-terminal L-methionyl-[peptide] + formate. Functionally, removes the formyl group from the N-terminal Met of newly synthesized proteins. Requires at least a dipeptide for an efficient rate of reaction. N-terminal L-methionine is a prerequisite for activity but the enzyme has broad specificity at other positions. This Chlorobium limicola (strain DSM 245 / NBRC 103803 / 6330) protein is Peptide deformylase.